A 50-amino-acid polypeptide reads, in one-letter code: MRVQVILECTETKLRHYTTTKNKKTHPERLEMMKYNPVLKKHTLYKETKK.

It belongs to the bacterial ribosomal protein bL33 family.

This is Large ribosomal subunit protein bL33 from Fusobacterium nucleatum subsp. nucleatum (strain ATCC 25586 / DSM 15643 / BCRC 10681 / CIP 101130 / JCM 8532 / KCTC 2640 / LMG 13131 / VPI 4355).